Here is a 388-residue protein sequence, read N- to C-terminus: Mannitol-1-phosphate 5-dehydrogenase (388 aa).

An NAD(+)-binding site is contributed by 4–15 (AVHFGAGNIGRG).

The protein belongs to the mannitol dehydrogenase family.

The catalysed reaction is D-mannitol 1-phosphate + NAD(+) = beta-D-fructose 6-phosphate + NADH + H(+). The chain is Mannitol-1-phosphate 5-dehydrogenase from Lactococcus lactis subsp. cremoris (strain MG1363).